Reading from the N-terminus, the 392-residue chain is tRNA (guanine-N(7)-)-methyltransferase (392 aa).

Glu123, Glu148, and Asp175 together coordinate S-adenosyl-L-methionine. Substrate contacts are provided by Lys201 and Asp231.

The protein belongs to the class I-like SAM-binding methyltransferase superfamily. TrmB family.

The enzyme catalyses guanosine(46) in tRNA + S-adenosyl-L-methionine = N(7)-methylguanosine(46) in tRNA + S-adenosyl-L-homocysteine. It functions in the pathway tRNA modification; N(7)-methylguanine-tRNA biosynthesis. Catalyzes the formation of N(7)-methylguanine at position 46 (m7G46) in tRNA. In Campylobacter jejuni (strain RM1221), this protein is tRNA (guanine-N(7)-)-methyltransferase.